Reading from the N-terminus, the 132-residue chain is Transcription antitermination protein NusB (132 aa).

It belongs to the NusB family.

Its function is as follows. Involved in transcription antitermination. Required for transcription of ribosomal RNA (rRNA) genes. Binds specifically to the boxA antiterminator sequence of the ribosomal RNA (rrn) operons. This Campylobacter jejuni subsp. jejuni serotype O:2 (strain ATCC 700819 / NCTC 11168) protein is Transcription antitermination protein NusB.